A 271-amino-acid polypeptide reads, in one-letter code: 4-diphosphocytidyl-2-C-methyl-D-erythritol kinase (271 aa).

Lys17 is an active-site residue. 97–107 contributes to the ATP binding site; the sequence is PVGSGLGGGSS. Asp137 is a catalytic residue.

Belongs to the GHMP kinase family. IspE subfamily.

The catalysed reaction is 4-CDP-2-C-methyl-D-erythritol + ATP = 4-CDP-2-C-methyl-D-erythritol 2-phosphate + ADP + H(+). Its pathway is isoprenoid biosynthesis; isopentenyl diphosphate biosynthesis via DXP pathway; isopentenyl diphosphate from 1-deoxy-D-xylulose 5-phosphate: step 3/6. Its function is as follows. Catalyzes the phosphorylation of the position 2 hydroxy group of 4-diphosphocytidyl-2C-methyl-D-erythritol. This is 4-diphosphocytidyl-2-C-methyl-D-erythritol kinase from Thermotoga maritima (strain ATCC 43589 / DSM 3109 / JCM 10099 / NBRC 100826 / MSB8).